The following is a 1222-amino-acid chain: Serine/threonine-protein kinase WNK4 (1222 aa).

The segment covering 1–17 (MLAPRNTETGVPMSQTE) has biased composition (polar residues). Residues 1–165 (MLAPRNTETG…DTETQAVATS (165 aa)) form a disordered region. Residues 90 to 101 (AGPTRSPPSSSK) show a composition bias toward low complexity. The residue at position 95 (serine 95) is a Phosphoserine. The span at 135-152 (EPPRVPDAAARERRREQE) shows a compositional bias: basic and acidic residues. Glycyl lysine isopeptide (Lys-Gly) (interchain with G-Cter in ubiquitin) cross-links involve residues lysine 154 and lysine 172. The Protein kinase domain maps to 171–429 (LKFDIEIGRG…IQDLLAHAFF (259 aa)). An ATP-binding site is contributed by serine 181. Glycyl lysine isopeptide (Lys-Gly) (interchain with G-Cter in ubiquitin) cross-links involve residues lysine 183, lysine 223, and lysine 238. Residues 251–254 (TELM) and lysine 301 contribute to the ATP site. Residue aspartate 318 is the Proton acceptor of the active site. Lysine 325 is covalently cross-linked (Glycyl lysine isopeptide (Lys-Gly) (interchain with G-Cter in ubiquitin)). 2 positions are modified to phosphoserine; by autocatalysis: serine 328 and serine 332. Glycyl lysine isopeptide (Lys-Gly) (interchain with G-Cter in ubiquitin) cross-links involve residues lysine 384, lysine 390, lysine 447, and lysine 451. The disordered stretch occupies residues 525–562 (RELEVLPPDSGPPPATVSLAPGPPSAFPPEPEEPEADQ). The segment covering 533–553 (DSGPPPATVSLAPGPPSAFPP) has biased composition (pro residues). Residues 554-564 (EPEEPEADQHQ) form an interaction with KLHL3 region. Serine 572 is modified (phosphoserine). Disordered stretches follow at residues 626–659 (RSGP…MRKN), 747–809 (DAGP…GAPF), 877–896 (SYPQ…SPPS), and 927–976 (SPGL…AQPL). 4 stretches are compositionally biased toward low complexity: residues 627 to 638 (SGPGSDFSPGDS), 757 to 769 (ALSP…ALPA), 793 to 807 (STSP…SPGA), and 877 to 890 (SYPQ…SLPV). The span at 935–944 (PPAPPGPLPS) shows a compositional bias: pro residues. Polar residues predominate over residues 953–963 (DQESLSAQTAE). Lysine 990 participates in a covalent cross-link: Glycyl lysine isopeptide (Lys-Gly) (interchain with G-Cter in ubiquitin). Positions 996–999 (RFQV) match the RFXV motif motif. A disordered region spans residues 1000–1087 (TSSKEPAEPP…SSPILSHPSP (88 aa)). Serine 1014 carries the post-translational modification Phosphoserine. Over residues 1014-1032 (SPTLSRSLKLPSPPLTSES) the composition is skewed to low complexity. A compositionally biased stretch (basic and acidic residues) spans 1044-1056 (ETREALAESDRAA). Glycyl lysine isopeptide (Lys-Gly) (interchain with G-Cter in ubiquitin) cross-links involve residues lysine 1123, lysine 1136, and lysine 1137. A disordered region spans residues 1166 to 1222 (RRLSKGSFPTSRRNSLQRSDLPGPGIMRRNSLSGSSTGSQEQRASKGVTFAGDIGRM). Polar residues-rich tracts occupy residues 1172-1183 (SFPTSRRNSLQR) and 1195-1207 (NSLS…SQEQ). The residue at position 1196 (serine 1196) is a Phosphoserine.

Belongs to the protein kinase superfamily. Ser/Thr protein kinase family. WNK subfamily. In terms of assembly, interacts with the C-terminal region of KCNJ1. Interacts with WNK1 and WNK3. Interacts with KLHL3. Mg(2+) is required as a cofactor. In terms of processing, autophosphorylated at Ser-328 and Ser-332, promoting its activation. Phosphorylated by WNK1 and WNK3. Phosphorylated at Ser-572 in a MAP3K15/ASK3-dependent process in response to osmotic stress or hypotonic low-chloride stimulation. Post-translationally, ubiquitinated by the BCR(KLHL3) complex, leading to its degradation. Also ubiquitinated by the BCR(KLHL2) complex. As to expression, locates to the distal convoluted tubule, the medullary collecting duct and the cortical collecting duct of the kidney. Expressed in pancreatic duct.

The protein localises to the cell junction. It is found in the tight junction. The enzyme catalyses L-seryl-[protein] + ATP = O-phospho-L-seryl-[protein] + ADP + H(+). The catalysed reaction is L-threonyl-[protein] + ATP = O-phospho-L-threonyl-[protein] + ADP + H(+). With respect to regulation, activation requires autophosphorylation of Ser-328 and Ser-332. Autophosphorylation and subsequent activation is inhibited by increases in intracellular ionic strength: Cl(-) potently inhibits WNK4 kinase activity via direct binding. Also inhibited by K(+) ions. In terms of biological role, serine/threonine-protein kinase component of the WNK4-SPAK/OSR1 kinase cascade, which acts as a key regulator of ion transport in the distal nephron and blood pressure. The WNK4-SPAK/OSR1 kinase cascade is composed of WNK4, which mediates phosphorylation and activation of downstream kinases OXSR1/OSR1 and STK39/SPAK. Following activation, OXSR1/OSR1 and STK39/SPAK catalyze phosphorylation of ion cotransporters, such as SLC12A1/NKCC2, SLC12A2/NKCC1, SLC12A3/NCC, SLC12A5/KCC2 or SLC12A6/KCC3, regulating their activity. Acts as a molecular switch that regulates the balance between renal salt reabsorption and K(+) secretion by modulating the activities of renal transporters and channels, including the Na-Cl cotransporter SLC12A3/NCC and the K(+) channel, KCNJ1/ROMK. Regulates NaCl reabsorption in the distal nephron by activating the thiazide-sensitive Na-Cl cotransporter SLC12A3/NCC in distal convoluted tubule cells of kidney: activates SLC12A3/NCC in a OXSR1/OSR1- and STK39/SPAK-dependent process. Also acts as a scaffold protein independently of its protein kinase activity: negatively regulates cell membrane localization of various transporters and channels (CFTR, KCNJ1/ROMK, SLC4A4, SLC26A9 and TRPV4) by clathrin-dependent endocytosis. Also inhibits the activity of the epithelial Na(+) channel (ENaC) SCNN1A, SCNN1B, SCNN1D in a inase-independent mechanism. May also phosphorylate NEDD4L. In Mus musculus (Mouse), this protein is Serine/threonine-protein kinase WNK4.